We begin with the raw amino-acid sequence, 462 residues long: Argininosuccinate lyase (462 aa).

It belongs to the lyase 1 family. Argininosuccinate lyase subfamily.

The protein localises to the cytoplasm. It catalyses the reaction 2-(N(omega)-L-arginino)succinate = fumarate + L-arginine. The protein operates within amino-acid biosynthesis; L-arginine biosynthesis; L-arginine from L-ornithine and carbamoyl phosphate: step 3/3. This is Argininosuccinate lyase from Thermus thermophilus (strain ATCC BAA-163 / DSM 7039 / HB27).